A 217-amino-acid polypeptide reads, in one-letter code: Probable transaldolase (217 aa).

K83 serves as the catalytic Schiff-base intermediate with substrate.

It belongs to the transaldolase family. Type 3B subfamily.

The protein localises to the cytoplasm. It catalyses the reaction D-sedoheptulose 7-phosphate + D-glyceraldehyde 3-phosphate = D-erythrose 4-phosphate + beta-D-fructose 6-phosphate. The protein operates within carbohydrate degradation; pentose phosphate pathway; D-glyceraldehyde 3-phosphate and beta-D-fructose 6-phosphate from D-ribose 5-phosphate and D-xylulose 5-phosphate (non-oxidative stage): step 2/3. Functionally, transaldolase is important for the balance of metabolites in the pentose-phosphate pathway. The chain is Probable transaldolase from Caulobacter vibrioides (strain NA1000 / CB15N) (Caulobacter crescentus).